The following is a 147-amino-acid chain: 3-dehydroquinate dehydratase (147 aa).

Tyr-23 serves as the catalytic Proton acceptor. 3 residues coordinate substrate: Asn-75, His-81, and Asp-88. Catalysis depends on His-101, which acts as the Proton donor. Substrate is bound by residues 102-103 (LS) and Arg-112.

It belongs to the type-II 3-dehydroquinase family. In terms of assembly, homododecamer.

The catalysed reaction is 3-dehydroquinate = 3-dehydroshikimate + H2O. Its pathway is metabolic intermediate biosynthesis; chorismate biosynthesis; chorismate from D-erythrose 4-phosphate and phosphoenolpyruvate: step 3/7. In terms of biological role, catalyzes a trans-dehydration via an enolate intermediate. This is 3-dehydroquinate dehydratase from Stenotrophomonas maltophilia (strain K279a).